We begin with the raw amino-acid sequence, 61 residues long: Small ribosomal subunit protein uS14B (61 aa).

Cys24, Cys27, Cys40, and Cys43 together coordinate Zn(2+).

It belongs to the universal ribosomal protein uS14 family. Zinc-binding uS14 subfamily. In terms of assembly, part of the 30S ribosomal subunit. Contacts proteins S3 and S10. Zn(2+) serves as cofactor.

In terms of biological role, binds 16S rRNA, required for the assembly of 30S particles and may also be responsible for determining the conformation of the 16S rRNA at the A site. The polypeptide is Small ribosomal subunit protein uS14B (Ligilactobacillus salivarius (strain UCC118) (Lactobacillus salivarius)).